A 183-amino-acid polypeptide reads, in one-letter code: Potassium-transporting ATPase KdpC subunit (183 aa).

A helical membrane pass occupies residues 10–30 (ASLLVLSLVTGVAYPLLVTGI).

This sequence belongs to the KdpC family. In terms of assembly, the system is composed of three essential subunits: KdpA, KdpB and KdpC.

The protein resides in the cell inner membrane. Its function is as follows. Part of the high-affinity ATP-driven potassium transport (or Kdp) system, which catalyzes the hydrolysis of ATP coupled with the electrogenic transport of potassium into the cytoplasm. This subunit acts as a catalytic chaperone that increases the ATP-binding affinity of the ATP-hydrolyzing subunit KdpB by the formation of a transient KdpB/KdpC/ATP ternary complex. This chain is Potassium-transporting ATPase KdpC subunit, found in Pseudomonas aeruginosa (strain ATCC 15692 / DSM 22644 / CIP 104116 / JCM 14847 / LMG 12228 / 1C / PRS 101 / PAO1).